A 113-amino-acid polypeptide reads, in one-letter code: Flagellar hook-basal body complex protein FliE (113 aa).

It belongs to the FliE family.

It localises to the bacterial flagellum basal body. In Burkholderia mallei (strain NCTC 10247), this protein is Flagellar hook-basal body complex protein FliE.